Reading from the N-terminus, the 140-residue chain is MSVYPECTWLLFVCLCHLLVSAGGSLLLPCEPINETISVEKDGCPKCLVFQTSICSGHCITKDPSYKSPLSTVYQRVCTYRDVRYETVRLPDCRPGVDPHVTFPVALSCDCNLCTMDTSDCAIQSLRPDFCMSQRASLPA.

The N-terminal stretch at 1–24 is a signal peptide; that stretch reads MSVYPECTWLLFVCLCHLLVSAGG. Intrachain disulfides connect cysteine 30/cysteine 78, cysteine 44/cysteine 93, cysteine 47/cysteine 131, cysteine 55/cysteine 109, cysteine 59/cysteine 111, and cysteine 114/cysteine 121. Residue asparagine 34 is glycosylated (N-linked (GlcNAc...) asparagine).

The protein belongs to the glycoprotein hormones subunit beta family. As to quaternary structure, heterodimer of an alpha and a beta chain.

The protein localises to the secreted. Its function is as follows. Involved in gametogenesis and steroidogenesis. The protein is Gonadotropin subunit beta-2 (cgbb) of Anguilla anguilla (European freshwater eel).